A 727-amino-acid polypeptide reads, in one-letter code: Putative ATP-dependent RNA helicase DHX15 (727 aa).

The tract at residues 1-41 (MSKRKHESSDSNKKAMKKQQNKIEEEEEEITNTTTTTTTTN) is disordered. The span at 31–41 (TNTTTTTTTTN) shows a compositional bias: low complexity. A Helicase ATP-binding domain is found at 87–251 (IKVIKENQVV…FENAPLIKVP (165 aa)). 100–107 (GETGSGKT) serves as a coordination point for ATP. A DEAH box motif is present at residues 198-201 (DEAH). Positions 273-445 (AVRTVIDIHT…SVVLQLLKLG (173 aa)) constitute a Helicase C-terminal domain.

Belongs to the DEAD box helicase family. DEAH subfamily. DDX15/PRP43 sub-subfamily.

Its subcellular location is the nucleus. The catalysed reaction is ATP + H2O = ADP + phosphate + H(+). In terms of biological role, pre-mRNA processing factor involved in disassembly of spliceosomes after the release of mature mRNA. The protein is Putative ATP-dependent RNA helicase DHX15 (dhx15) of Dictyostelium discoideum (Social amoeba).